The primary structure comprises 362 residues: Anthranilate phosphoribosyltransferase (362 aa).

Residues Gly96, 99 to 100 (GD), Thr104, 106 to 109 (NIST), 124 to 132 (KHGNRAASS), and Gly136 contribute to the 5-phospho-alpha-D-ribose 1-diphosphate site. Residue Gly96 coordinates anthranilate. Ser108 serves as a coordination point for Mg(2+). Asn127 lines the anthranilate pocket. Anthranilate is bound at residue Arg182. Mg(2+)-binding residues include Asp240 and Glu241.

This sequence belongs to the anthranilate phosphoribosyltransferase family. As to quaternary structure, homodimer. Mg(2+) serves as cofactor.

The enzyme catalyses N-(5-phospho-beta-D-ribosyl)anthranilate + diphosphate = 5-phospho-alpha-D-ribose 1-diphosphate + anthranilate. The protein operates within amino-acid biosynthesis; L-tryptophan biosynthesis; L-tryptophan from chorismate: step 2/5. Its function is as follows. Catalyzes the transfer of the phosphoribosyl group of 5-phosphorylribose-1-pyrophosphate (PRPP) to anthranilate to yield N-(5'-phosphoribosyl)-anthranilate (PRA). The chain is Anthranilate phosphoribosyltransferase from Rhodococcus jostii (strain RHA1).